A 596-amino-acid polypeptide reads, in one-letter code: Phosphomethylpyrimidine synthase 1 (596 aa).

Residues asparagine 228, methionine 257, tyrosine 286, histidine 322, 342–344, 383–386, and glutamate 422 each bind substrate; these read SRG and DGLR. Zn(2+) is bound at residue histidine 426. Tyrosine 449 contributes to the substrate binding site. Histidine 490 serves as a coordination point for Zn(2+). [4Fe-4S] cluster-binding residues include cysteine 570, cysteine 573, and cysteine 578.

Belongs to the ThiC family. Homodimer. Requires [4Fe-4S] cluster as cofactor.

It catalyses the reaction 5-amino-1-(5-phospho-beta-D-ribosyl)imidazole + S-adenosyl-L-methionine = 4-amino-2-methyl-5-(phosphooxymethyl)pyrimidine + CO + 5'-deoxyadenosine + formate + L-methionine + 3 H(+). It functions in the pathway cofactor biosynthesis; thiamine diphosphate biosynthesis. In terms of biological role, catalyzes the synthesis of the hydroxymethylpyrimidine phosphate (HMP-P) moiety of thiamine from aminoimidazole ribotide (AIR) in a radical S-adenosyl-L-methionine (SAM)-dependent reaction. This Syntrophotalea carbinolica (strain DSM 2380 / NBRC 103641 / GraBd1) (Pelobacter carbinolicus) protein is Phosphomethylpyrimidine synthase 1.